The primary structure comprises 138 residues: Transcription factor Atoh7-b (138 aa).

In terms of domain architecture, bHLH spans 33–85; sequence KRRLAANARERRRMQGLNTAFDSLRKVVPQWGEDKKLSKYETLQMALSYIMAL.

The protein resides in the nucleus. It is found in the perikaryon. Its subcellular location is the cell projection. It localises to the axon. Functionally, transcription factor that binds to DNA at the consensus sequence 5'-CAG[GC]TG-3'. Positively regulates the determination of retinal ganglion cell fate and formation of the optic nerve and retino-hypothalamic tract. Required for retinal circadian rhythm photoentrainment. Plays a role in brainstem auditory signaling and binaural processing. Regulates the differentiation of olfactory receptor neurons. During retinal neurogenesis, activates the transcription of several genes such as brn3d, coe3, cbfa2t2, glis2, elrC and xgadd45-gamma. The sequence is that of Transcription factor Atoh7-b from Xenopus laevis (African clawed frog).